Here is a 194-residue protein sequence, read N- to C-terminus: Peptidyl-tRNA hydrolase (194 aa).

A tRNA-binding site is contributed by Tyr-16. His-21 acts as the Proton acceptor in catalysis. TRNA-binding residues include Phe-67, Asn-69, and Asn-115.

This sequence belongs to the PTH family. In terms of assembly, monomer.

The protein resides in the cytoplasm. The enzyme catalyses an N-acyl-L-alpha-aminoacyl-tRNA + H2O = an N-acyl-L-amino acid + a tRNA + H(+). In terms of biological role, hydrolyzes ribosome-free peptidyl-tRNAs (with 1 or more amino acids incorporated), which drop off the ribosome during protein synthesis, or as a result of ribosome stalling. Catalyzes the release of premature peptidyl moieties from peptidyl-tRNA molecules trapped in stalled 50S ribosomal subunits, and thus maintains levels of free tRNAs and 50S ribosomes. The polypeptide is Peptidyl-tRNA hydrolase (Salmonella agona (strain SL483)).